The primary structure comprises 340 residues: Phosphoribosylformylglycinamidine cyclo-ligase (340 aa).

Belongs to the AIR synthase family.

It localises to the cytoplasm. It catalyses the reaction 2-formamido-N(1)-(5-O-phospho-beta-D-ribosyl)acetamidine + ATP = 5-amino-1-(5-phospho-beta-D-ribosyl)imidazole + ADP + phosphate + H(+). The protein operates within purine metabolism; IMP biosynthesis via de novo pathway; 5-amino-1-(5-phospho-D-ribosyl)imidazole from N(2)-formyl-N(1)-(5-phospho-D-ribosyl)glycinamide: step 2/2. This Streptococcus pyogenes serotype M2 (strain MGAS10270) protein is Phosphoribosylformylglycinamidine cyclo-ligase.